An 862-amino-acid chain; its full sequence is uncharacterized protein (862 aa).

Disordered regions lie at residues 45–91 (HPPV…PDEV), 633–824 (RAEQ…GDDD), and 837–862 (GGSG…LLLS). 2 stretches are compositionally biased toward acidic residues: residues 57–69 (MDVD…EKDE) and 78–91 (PEVE…PDEV). 3 stretches are compositionally biased toward basic and acidic residues: residues 633 to 650 (RAEQ…DAAK), 657 to 686 (REAE…KAEK), and 694 to 703 (TKKEKTEKKT). The segment covering 751-760 (EKKKRTAAKK) has biased composition (basic residues). Basic and acidic residues predominate over residues 761 to 779 (KTVDRPSGHRPSSKKEYRS).

This is an uncharacterized protein from Ictaluridae (bullhead catfishes).